The primary structure comprises 316 residues: DNA-directed RNA polymerase subunit alpha (316 aa).

Residues 1–229 (MLEMEKPRID…EYLKLFTEID (229 aa)) are alpha N-terminal domain (alpha-NTD). Positions 246–316 (KDKILEMSIE…LNLSFRKSED (71 aa)) are alpha C-terminal domain (alpha-CTD).

The protein belongs to the RNA polymerase alpha chain family. In terms of assembly, homodimer. The RNAP catalytic core consists of 2 alpha, 1 beta, 1 beta' and 1 omega subunit. When a sigma factor is associated with the core the holoenzyme is formed, which can initiate transcription.

It catalyses the reaction RNA(n) + a ribonucleoside 5'-triphosphate = RNA(n+1) + diphosphate. In terms of biological role, DNA-dependent RNA polymerase catalyzes the transcription of DNA into RNA using the four ribonucleoside triphosphates as substrates. The protein is DNA-directed RNA polymerase subunit alpha of Syntrophomonas wolfei subsp. wolfei (strain DSM 2245B / Goettingen).